The following is a 283-amino-acid chain: Large ribosomal subunit protein uL2 (283 aa).

The tract at residues 215–283 is disordered; sequence RHKGIRPTVR…IRGRKKRINN (69 aa). The span at 274-283 shows a compositional bias: basic residues; the sequence is IRGRKKRINN.

It belongs to the universal ribosomal protein uL2 family. Part of the 50S ribosomal subunit. Forms a bridge to the 30S subunit in the 70S ribosome.

Its function is as follows. One of the primary rRNA binding proteins. Required for association of the 30S and 50S subunits to form the 70S ribosome, for tRNA binding and peptide bond formation. It has been suggested to have peptidyltransferase activity; this is somewhat controversial. Makes several contacts with the 16S rRNA in the 70S ribosome. The sequence is that of Large ribosomal subunit protein uL2 from Mycoplasma mobile (strain ATCC 43663 / 163K / NCTC 11711) (Mesomycoplasma mobile).